We begin with the raw amino-acid sequence, 346 residues long: Ribosomal RNA small subunit methyltransferase H (346 aa).

Residues glycine 46–tyrosine 48, aspartate 63, phenylalanine 90, aspartate 113, and glutamine 120 each bind S-adenosyl-L-methionine. Residues glycine 270–serine 346 are disordered.

Belongs to the methyltransferase superfamily. RsmH family.

The protein localises to the cytoplasm. It catalyses the reaction cytidine(1402) in 16S rRNA + S-adenosyl-L-methionine = N(4)-methylcytidine(1402) in 16S rRNA + S-adenosyl-L-homocysteine + H(+). In terms of biological role, specifically methylates the N4 position of cytidine in position 1402 (C1402) of 16S rRNA. This chain is Ribosomal RNA small subunit methyltransferase H, found in Brucella suis (strain ATCC 23445 / NCTC 10510).